The chain runs to 502 residues: Glycogen synthase (502 aa).

Lys24 provides a ligand contact to ADP-alpha-D-glucose.

The protein belongs to the glycosyltransferase 1 family. Bacterial/plant glycogen synthase subfamily.

It carries out the reaction [(1-&gt;4)-alpha-D-glucosyl](n) + ADP-alpha-D-glucose = [(1-&gt;4)-alpha-D-glucosyl](n+1) + ADP + H(+). The protein operates within glycan biosynthesis; glycogen biosynthesis. Synthesizes alpha-1,4-glucan chains using ADP-glucose. The sequence is that of Glycogen synthase from Nitrosomonas eutropha (strain DSM 101675 / C91 / Nm57).